A 432-amino-acid polypeptide reads, in one-letter code: SVP1-like protein 2 (432 aa).

WD repeat units lie at residues 223–263 (AHKS…LLYE) and 268–307 (LDRAIVTSMKFSHDDSKLAVLSDKNTLHVYNVSPLNTSSG).

The protein belongs to the WD repeat PROPPIN family.

The protein localises to the vacuole membrane. Its subcellular location is the cytoplasmic vesicle membrane. In terms of biological role, involved in mitochondrial or peroxisomal functions and amino acid signaling pathways. The sequence is that of SVP1-like protein 2 (HSV2) from Debaryomyces hansenii (strain ATCC 36239 / CBS 767 / BCRC 21394 / JCM 1990 / NBRC 0083 / IGC 2968) (Yeast).